Here is a 230-residue protein sequence, read N- to C-terminus: TorCAD operon transcriptional regulatory protein TorR (230 aa).

Residues 4–117 enclose the Response regulatory domain; that stretch reads HIVIVEDEPV…ELVVRVKNLL (114 aa). 4-aspartylphosphate is present on D53. The segment at residues 132–227 is a DNA-binding region (ompR/PhoB-type); that stretch reads DNCYRFAGYC…QHGEGYFLAA (96 aa).

In terms of processing, phosphorylated and dephosphorylated by TorS.

The protein localises to the cytoplasm. In terms of biological role, member of the two-component regulatory system TorS/TorR involved in the anaerobic utilization of trimethylamine-N-oxide (TMAO). Phosphorylated TorR activates the transcription of the torCAD operon by binding to four decameric boxes located in the torCAD promoter. Box1, 2 and 4 contain the DNA sequence 5'-CTGTTCATAT-3' and box3 contains the DNA sequence 5'-CCGTTCATCC-3'. Phosphorylated as well as unphosphorylated TorR negatively regulates its own expression by binding to box1 and 2. This chain is TorCAD operon transcriptional regulatory protein TorR (torR), found in Escherichia coli O157:H7.